We begin with the raw amino-acid sequence, 260 residues long: Thiazole synthase (260 aa).

Lys-100 functions as the Schiff-base intermediate with DXP in the catalytic mechanism. Residues Gly-162, 188–189 (AG), and 210–211 (NT) each bind 1-deoxy-D-xylulose 5-phosphate.

The protein belongs to the ThiG family. Homotetramer. Forms heterodimers with either ThiH or ThiS.

It is found in the cytoplasm. The enzyme catalyses [ThiS sulfur-carrier protein]-C-terminal-Gly-aminoethanethioate + 2-iminoacetate + 1-deoxy-D-xylulose 5-phosphate = [ThiS sulfur-carrier protein]-C-terminal Gly-Gly + 2-[(2R,5Z)-2-carboxy-4-methylthiazol-5(2H)-ylidene]ethyl phosphate + 2 H2O + H(+). Its pathway is cofactor biosynthesis; thiamine diphosphate biosynthesis. Catalyzes the rearrangement of 1-deoxy-D-xylulose 5-phosphate (DXP) to produce the thiazole phosphate moiety of thiamine. Sulfur is provided by the thiocarboxylate moiety of the carrier protein ThiS. In vitro, sulfur can be provided by H(2)S. The chain is Thiazole synthase from Wolinella succinogenes (strain ATCC 29543 / DSM 1740 / CCUG 13145 / JCM 31913 / LMG 7466 / NCTC 11488 / FDC 602W) (Vibrio succinogenes).